Here is a 209-residue protein sequence, read N- to C-terminus: MDFYYLPGSAPCRAVQMTAAAVGVELNLKLTDLMKGEHMKPEFLKINPQHCIPTLVDNGFALWESRAICTYLAEKYGKDDKLYPKDPQKRAVVNQRMYFDMGTLYQRFADYYYPQIFAKQPANPENEQKMKDAVGFLNSFLDGHKYVAGDSLTIADLSILATISTYDVAGFDLAKYQHVAAWYENIRKEAPGAAINQAGIEEFKKYFEK.

In terms of domain architecture, GST N-terminal spans 1–80 (MDFYYLPGSA…YLAEKYGKDD (80 aa)). Glutathione is bound by residues S9, 50-52 (HCI), and 64-66 (ESR). The GST C-terminal domain maps to 86–207 (DPQKRAVVNQ…AGIEEFKKYF (122 aa)).

It belongs to the GST superfamily. Theta family. In terms of assembly, homodimer.

It catalyses the reaction RX + glutathione = an S-substituted glutathione + a halide anion + H(+). The enzyme catalyses 1,1,1-trichloro-2,2-bis(4-chlorophenyl)ethane = 1,1-dichloro-2,2-bis(4-chlorophenyl)ethylene + chloride + H(+). In terms of biological role, conjugation of reduced glutathione to a wide number of exogenous and endogenous hydrophobic electrophiles. Has DDT dehydrochlorinase activity. This Anopheles gambiae (African malaria mosquito) protein is Glutathione S-transferase 1, isoform C (GstD1).